A 1064-amino-acid chain; its full sequence is MPKRRDIETILVIGSGPIVIGQAAEFDYAGTQACLALKEEGYKVILVNSNPATIMTDTEIADKVYMEPLTLDFVARIIRKERPDAILPTLGGQTGLNLAVELAKAGVLEECGVEILGTKLEAIEKAEDREQFRALMNELGEPVPESAIIHSLEEAYAFVEQIGYPVIVRPAFTLGGTGGGICTNEEELVEIVSTGLKLSPVHQCLLERSIAGYNQIEYEVMRDANDNAIVVCNMENIDPVGIHTGDSIVVAPSQTLSDREYQLLRNASLKIIRALGIEGGCNVQLALDPDSFRYYVIEVNPRVSRSSALASKATGYPIAKLAAKIAVGLTLDEMINPVTGKTYACFEPALDYVVTKIPRFPFDKFESANRRLGTQMKATGEVMSIGRTFEESLLKAVRSLEIGVHHLELNEAKTAADDVMEKRIRKAGDERLFYIAEALRRGVTVETLHEWSQIDRFFLHKIQNIIEMETVLKNHPGDLDVLKKAKGLGFSDAAIAALWNKTERDVYALRRQEGIVPVYKMVDTCAAEFTSETPYYYSTYEEENESIVTEKPSVIVLGSGPIRIGQGIEFDYATVHCVLAIKQAGYEAIIINNNPETVSTDFSTSDKLYFEPLTAEDVMHVIDLEQPVGVIVQFGGQTAINLAAELEARGVRLLGTTLEDLDRAEDRDKFEQALSELGIPKPAGKTAVSVEEAVAIAEEIGYPVLVRPSYVLGGRAMEIVYNREELLHYMEHAVRVNPQHPVLVDRYITGKEVEVDAIADGETVVIPGIMEHIERAGVHSGDSIAVYPPQTLSDDVIAKITDYTVKLARGLHIVGLLNIQFVVAGSDVYVLEVNPRSSRTVPFLSKITGVPMANLATKAILGAKLADMGYETGVCPVRPGVYVKVPVFSFAKLRNVDISLGPEMKSTGEVIGKDVTFEKALYKGLVASGIQIQPHGAVLLTVADKDKEEAVELARRFADIGYQLLATNGTAETLKAAGIPVTVVNKIHSASPNILDVIRQGKAQVVINTLTKGKQPESDGFRIRREVENGIPCLTSLDTARAMLQVLESMTFSTTAMTEGLVRS.

The tract at residues 1–401 (MPKRRDIETI…SLLKAVRSLE (401 aa)) is carboxyphosphate synthetic domain. ATP-binding residues include Arg129, Arg169, Gly175, Gly176, Arg208, Ile210, Gly241, Ile242, His243, Gln284, and Glu298. The ATP-grasp 1 domain maps to 133 to 327 (RALMNELGEP…IAKLAAKIAV (195 aa)). Residues Gln284, Glu298, and Asn300 each coordinate Mg(2+). The Mn(2+) site is built by Gln284, Glu298, and Asn300. The interval 402-546 (IGVHHLELNE…YSTYEEENES (145 aa)) is oligomerization domain. The segment at 547-929 (IVTEKPSVIV…ALYKGLVASG (383 aa)) is carbamoyl phosphate synthetic domain. The region spanning 671-861 (EQALSELGIP…MANLATKAIL (191 aa)) is the ATP-grasp 2 domain. Residues Arg707, Arg746, Ile748, Glu752, Gly777, Val778, His779, Ser780, Gln820, and Glu832 each contribute to the ATP site. Positions 820, 832, and 834 each coordinate Mg(2+). Residues Gln820, Glu832, and Asn834 each coordinate Mn(2+). Positions 930–1064 (IQIQPHGAVL…TAMTEGLVRS (135 aa)) constitute an MGS-like domain. The tract at residues 930–1064 (IQIQPHGAVL…TAMTEGLVRS (135 aa)) is allosteric domain.

The protein belongs to the CarB family. In terms of assembly, composed of two chains; the small (or glutamine) chain promotes the hydrolysis of glutamine to ammonia, which is used by the large (or ammonia) chain to synthesize carbamoyl phosphate. Tetramer of heterodimers (alpha,beta)4. Requires Mg(2+) as cofactor. It depends on Mn(2+) as a cofactor.

The enzyme catalyses hydrogencarbonate + L-glutamine + 2 ATP + H2O = carbamoyl phosphate + L-glutamate + 2 ADP + phosphate + 2 H(+). It catalyses the reaction hydrogencarbonate + NH4(+) + 2 ATP = carbamoyl phosphate + 2 ADP + phosphate + 2 H(+). Its pathway is amino-acid biosynthesis; L-arginine biosynthesis; carbamoyl phosphate from bicarbonate: step 1/1. The protein operates within pyrimidine metabolism; UMP biosynthesis via de novo pathway; (S)-dihydroorotate from bicarbonate: step 1/3. In terms of biological role, small subunit of the glutamine-dependent carbamoyl phosphate synthetase (CPSase). CPSase catalyzes the formation of carbamoyl phosphate from the ammonia moiety of glutamine, carbonate, and phosphate donated by ATP, constituting the first step of the biosynthetic pathway leading to pyrimidine nucleotides. The large subunit (synthetase) binds the substrates ammonia (free or transferred from glutamine from the small subunit), hydrogencarbonate and ATP and carries out an ATP-coupled ligase reaction, activating hydrogencarbonate by forming carboxy phosphate which reacts with ammonia to form carbamoyl phosphate. This is Carbamoyl phosphate synthase pyrimidine-specific large chain (pyrAB) from Geobacillus stearothermophilus (Bacillus stearothermophilus).